Consider the following 535-residue polypeptide: Formate--tetrahydrofolate ligase (535 aa).

50–57 lines the ATP pocket; the sequence is TPAGEGKT.

Belongs to the formate--tetrahydrofolate ligase family.

It carries out the reaction (6S)-5,6,7,8-tetrahydrofolate + formate + ATP = (6R)-10-formyltetrahydrofolate + ADP + phosphate. It participates in one-carbon metabolism; tetrahydrofolate interconversion. This Picrophilus torridus (strain ATCC 700027 / DSM 9790 / JCM 10055 / NBRC 100828 / KAW 2/3) protein is Formate--tetrahydrofolate ligase.